A 308-amino-acid polypeptide reads, in one-letter code: GTP cyclohydrolase FolE2 (308 aa).

It belongs to the GTP cyclohydrolase IV family.

The enzyme catalyses GTP + H2O = 7,8-dihydroneopterin 3'-triphosphate + formate + H(+). The protein operates within cofactor biosynthesis; 7,8-dihydroneopterin triphosphate biosynthesis; 7,8-dihydroneopterin triphosphate from GTP: step 1/1. Converts GTP to 7,8-dihydroneopterin triphosphate. The protein is GTP cyclohydrolase FolE2 of Idiomarina loihiensis (strain ATCC BAA-735 / DSM 15497 / L2-TR).